The chain runs to 370 residues: Cobalt-precorrin-5B C(1)-methyltransferase (370 aa).

The protein belongs to the CbiD family.

It catalyses the reaction Co-precorrin-5B + S-adenosyl-L-methionine = Co-precorrin-6A + S-adenosyl-L-homocysteine. It functions in the pathway cofactor biosynthesis; adenosylcobalamin biosynthesis; cob(II)yrinate a,c-diamide from sirohydrochlorin (anaerobic route): step 6/10. Functionally, catalyzes the methylation of C-1 in cobalt-precorrin-5B to form cobalt-precorrin-6A. The protein is Cobalt-precorrin-5B C(1)-methyltransferase of Pseudomonas savastanoi pv. phaseolicola (strain 1448A / Race 6) (Pseudomonas syringae pv. phaseolicola (strain 1448A / Race 6)).